We begin with the raw amino-acid sequence, 78 residues long: MMLLQTEKALRLLEQYNTITILVPREYTKSKIKEFFEKKGYKVKKVNTLITKKGLKKAYVRFKEEGVARKVAEELGGL.

Belongs to the universal ribosomal protein uL23 family. As to quaternary structure, part of the 50S ribosomal subunit. Contacts protein L29.

Functionally, binds to 23S rRNA. One of the proteins that surrounds the polypeptide exit tunnel on the outside of the ribosome. The chain is Large ribosomal subunit protein uL23 from Nanoarchaeum equitans (strain Kin4-M).